Consider the following 557-residue polypeptide: Organic cation/carnitine transporter 2 (557 aa).

Topologically, residues 1-20 are cytoplasmic; sequence MRDYDEVTAFLGEWGPFQRL. Residues 21–41 traverse the membrane as a helical segment; it reads IFFLLSASIIPNGFNGMSIVF. Topologically, residues 42–142 are extracellular; sequence LAGTPEHRCL…DLVCKDDWKA (101 aa). N-linked (GlcNAc...) asparagine glycans are attached at residues Asn57, Asn64, and Asn91. The helical transmembrane segment at 143–163 threads the bilayer; that stretch reads PLTTSLFFVGVLMGSFISGQL. Residues 164-172 are Cytoplasmic-facing; that stretch reads SDRFGRKNV. A helical membrane pass occupies residues 173 to 193; it reads LFLTMGMQTGFSFLQVFSVNF. Over 194 to 197 the chain is Extracellular; sequence EMFT. The chain crosses the membrane as a helical span at residues 198-218; it reads VLFVLVGMGQISNYVAAFVLG. Residue 218–225 coordinates ATP; sequence GTEILSKS. The Cytoplasmic segment spans residues 219–232; it reads TEILSKSIRIIFAT. A helical membrane pass occupies residues 233–253; it reads LGVCIFYAFGFMVLPLFAYFI. Topologically, residues 254-257 are extracellular; sequence RDWR. A helical membrane pass occupies residues 258 to 278; the sequence is MLLLALTVPGVLCGALWWFIP. The Cytoplasmic portion of the chain corresponds to 279–341; the sequence is ESPRWLISQG…YDLIRTRNIR (63 aa). A helical transmembrane segment spans residues 342-362; that stretch reads VITIMSIILWLTISVGYFGLS. Over 363 to 373 the chain is Extracellular; that stretch reads LDTPNLHGDIY. The helical transmembrane segment at 374 to 394 threads the bilayer; the sequence is VNCFLLAAVEVPAYVLAWLLL. At 395–406 the chain is on the cytoplasmic side; the sequence is QYLPRRYSISAA. The helical transmembrane segment at 407 to 427 threads the bilayer; it reads LFLGGSVLLFMQLVPSELFYL. Topologically, residues 428–430 are extracellular; it reads STA. The helical transmembrane segment at 431–451 threads the bilayer; sequence LVMVGKFGITSAYSMVYVYTA. The Cytoplasmic portion of the chain corresponds to 452–462; it reads ELYPTVVRNMG. A helical transmembrane segment spans residues 463 to 483; sequence VGVSSTASRLGSILSPYFVYL. The Extracellular portion of the chain corresponds to 484-488; it reads GAYDR. Tyr486 is subject to Phosphotyrosine. Residues 489–509 traverse the membrane as a helical segment; that stretch reads FLPYILMGSLTILTAILTLFF. At 510-557 the chain is on the cytoplasmic side; sequence PESFGVPLPDTIDQMLRVKGIKQWQIQSQTRMQKDGEESPTVLKSTAF. Residue Ser548 is modified to Phosphoserine. Residue Thr550 is modified to Phosphothreonine.

Belongs to the major facilitator (TC 2.A.1) superfamily. Organic cation transporter (TC 2.A.1.19) family. Interacts with PDZK1. Widely expressed. Expressed in kidney, liver and testis. Expressed at the brush border of the small, large intestine and colon (at protein level).

The protein resides in the apical cell membrane. The protein localises to the basal cell membrane. Its subcellular location is the cell membrane. The enzyme catalyses (R)-carnitine(out) + Na(+)(out) = (R)-carnitine(in) + Na(+)(in). It carries out the reaction glycine betaine(out) + Na(+)(out) = glycine betaine(in) + Na(+)(in). The catalysed reaction is glycine betaine(out) + (R)-carnitine(in) = glycine betaine(in) + (R)-carnitine(out). It catalyses the reaction O-butanoyl-(R)-carnitine(out) + Na(+)(out) = O-butanoyl-(R)-carnitine(in) + Na(+)(in). The enzyme catalyses O-acetyl-(R)-carnitine(out) + Na(+)(out) = O-acetyl-(R)-carnitine(in) + Na(+)(in). It carries out the reaction O-propanoyl-(R)-carnitine(out) + Na(+)(out) = O-propanoyl-(R)-carnitine(in) + Na(+)(in). The catalysed reaction is (S)-carnitine(out) + Na(+)(out) = (S)-carnitine(in) + Na(+)(in). It catalyses the reaction an O-acyl-(R)-carnitine(out) + Na(+)(out) = an O-acyl-(R)-carnitine(in) + Na(+)(in). The enzyme catalyses L-glutamyl-L-arginyl-glycyl-L-methionyl-L-threonine(out) + Na(+)(out) = L-glutamyl-L-arginyl-glycyl-L-methionyl-L-threonine(in) + Na(+)(in). It carries out the reaction N,N-dimethylglycine(out) + Na(+)(out) = N,N-dimethylglycine(in) + Na(+)(in). Its activity is regulated as follows. Inhibited by emetine, quinidine and verapamil. The IC(50) of emetine is 4.2 uM. Not inhibited by valproic acid. Transport of (R)-carnitine is stimulated by cholesterol in the plasma membrane. Its function is as follows. Sodium-ion dependent, high affinity carnitine transporter. Involved in the active cellular uptake of carnitine. Transports one sodium ion with one molecule of carnitine. Also transports organic cations such as tetraethylammonium (TEA) without the involvement of sodium. Also relative uptake activity ratio of carnitine to TEA is 11.3. May also contribute to regulate the transport of organic compounds in testis across the blood-testis-barrier. The chain is Organic cation/carnitine transporter 2 from Mus musculus (Mouse).